Reading from the N-terminus, the 442-residue chain is DDB1- and CUL4-associated factor 12-B (442 aa).

Over residues 1–13 (MTRRPVSRKRRAT) the composition is skewed to basic residues. The interval 1-31 (MTRRPVSRKRRATHGTGPGEQSDWDHSAHKR) is disordered. 4 WD repeats span residues 132–173 (SHQS…PVCV), 177–215 (GHNDWIFSIAWISDTMAVSGSRDGFMALWEMTDEVVNKR), 245–284 (PVNCKVRALAFNGNNKELGAVSLDGFFHLWKAEQTLSKLL), and 333–370 (EQGSGIRSVSFYEHIVTVGTGQGALLFYDIRAQRFLED).

It belongs to the WD repeat DCAF12 family. As to quaternary structure, component of the DCX(DCAF12) E3 ubiquitin ligase complex, at least composed of cul4 (cul4a or cul4b), ddb1, dcaf12 and rbx1.

It is found in the cytoplasm. The protein localises to the cytoskeleton. It localises to the microtubule organizing center. The protein resides in the centrosome. Its subcellular location is the nucleus. It participates in protein modification; protein ubiquitination. Functionally, substrate-recognition component of a DCX (DDB1-CUL4-X-box) E3 ubiquitin-protein ligase complex of the DesCEND (destruction via C-end degrons) pathway, which recognizes a C-degron located at the extreme C terminus of target proteins, leading to their ubiquitination and degradation. The C-degron recognized by the DesCEND pathway is usually a motif of less than ten residues and can be present in full-length proteins, truncated proteins or proteolytically cleaved forms. The DCX(DCAF12) complex specifically recognizes proteins with a diglutamate (Glu-Glu) at the C-terminus leading to their ubiquitination and degradation. Also directly recognizes the C-terminal glutamate-leucine (Glu-Leu) degron as an alternative degron in proteins leading to their ubiquitination and degradation. The sequence is that of DDB1- and CUL4-associated factor 12-B (dcaf12-b) from Xenopus laevis (African clawed frog).